We begin with the raw amino-acid sequence, 229 residues long: UPF0758 protein MM_2791 (229 aa).

An MPN domain is found at 106 to 228; it reads KISSPKDVYT…YVSLKDEGFV (123 aa). The Zn(2+) site is built by H177, H179, and D190. Residues 177–190 carry the JAMM motif motif; sequence HNHPSGDPSPSRED.

The protein belongs to the UPF0758 family.

This is UPF0758 protein MM_2791 from Methanosarcina mazei (strain ATCC BAA-159 / DSM 3647 / Goe1 / Go1 / JCM 11833 / OCM 88) (Methanosarcina frisia).